The sequence spans 613 residues: Zinc finger protein 665 (613 aa).

18 consecutive C2H2-type zinc fingers follow at residues 113-135, 141-163, 169-191, 197-219, 225-247, 253-275, 281-303, 309-331, 337-359, 365-387, 393-415, 421-443, 449-471, 477-499, 505-527, 533-555, 561-583, and 589-611; these read YKCD…KRIH, YRCN…QVIH, YKCN…QRIH, YKCN…QVIH, YKCN…RRIH, YKCN…QTIH, YKCN…RRVH, YKCN…QIIH, FKCN…RRIH, YRCD…QAIH, YKCN…RGIH, YKCD…WRVH, and YRCN…MAIH.

It belongs to the krueppel C2H2-type zinc-finger protein family.

It localises to the nucleus. Functionally, may be involved in transcriptional regulation. In Pongo abelii (Sumatran orangutan), this protein is Zinc finger protein 665 (ZNF665).